Here is a 166-residue protein sequence, read N- to C-terminus: Ribosome maturation factor RimM (166 aa).

The region spanning 90–165 is the PRC barrel domain; that stretch reads NDNDAFSIFY…IITLKNIEGL (76 aa).

It belongs to the RimM family. As to quaternary structure, binds ribosomal protein uS19.

Its subcellular location is the cytoplasm. In terms of biological role, an accessory protein needed during the final step in the assembly of 30S ribosomal subunit, possibly for assembly of the head region. Essential for efficient processing of 16S rRNA. May be needed both before and after RbfA during the maturation of 16S rRNA. It has affinity for free ribosomal 30S subunits but not for 70S ribosomes. The protein is Ribosome maturation factor RimM of Mesoplasma florum (strain ATCC 33453 / NBRC 100688 / NCTC 11704 / L1) (Acholeplasma florum).